A 658-amino-acid chain; its full sequence is ATP-dependent RNA helicase DDX3Y (658 aa).

The segment covering 1-10 has biased composition (basic and acidic residues); sequence MSHVVVKNDP. Residues 1–141 form a disordered region; that stretch reads MSHVVVKNDP…DDWSKPLPPS (141 aa). Residue Ser-2 is modified to N-acetylserine. Polar residues predominate over residues 15–34; sequence QLANLDLNSEKQSGGASTAS. A compositionally biased stretch (basic and acidic residues) spans 44 to 68; that stretch reads RNREASKGFHDKDSSGWSCSKDKDA. Position 55 is an N6-acetyllysine (Lys-55). Phosphoserine occurs at positions 81, 85, and 89. The span at 93 to 128 shows a compositional bias: basic and acidic residues; the sequence is GRFDDRGRSDYDGIGNRDRPGFGRFERSGHSRWCDK. Omega-N-methylarginine is present on Arg-100. Ser-101 is modified (phosphoserine). Residue Tyr-103 is modified to Phosphotyrosine. An Omega-N-methylarginine modification is found at Arg-109. Residues Ser-129 and Ser-181 each carry the phosphoserine modification. The Q motif motif lies at 178 to 206; sequence ENFSDIDMGEIIMGNIELTRYTRPTPVQK. 198–205 lines the ATP pocket; sequence YTRPTPVQ. The 193-residue stretch at 209-401 folds into the Helicase ATP-binding domain; the sequence is IPIIKGKRDL…RDFLDEYIFL (193 aa). Lys-213 participates in a covalent cross-link: Glycyl lysine isopeptide (Lys-Gly) (interchain with G-Cter in SUMO2). 222–229 serves as a coordination point for ATP; the sequence is AQTGSGKT. Positions 345-348 match the DEAD box motif; sequence DEAD. Residues 412-573 enclose the Helicase C-terminal domain; sequence NITQKVVWVE…EVPSWLENMA (162 aa). The residue at position 454 (Ser-454) is a Phosphoserine. The residue at position 588 (Arg-588) is an Omega-N-methylarginine. Phosphoserine occurs at positions 590 and 601. Residues 597 to 625 are disordered; that stretch reads DYRQSSGSSSSGFGASRGSSSRSGGSGYG. Low complexity predominate over residues 601-619; sequence SSGSSSSGFGASRGSSSRS. 2 positions are modified to omega-N-methylarginine: Arg-613 and Arg-628.

The protein belongs to the DEAD box helicase family. DDX3/DED1 subfamily. In terms of assembly, may interact with TDRD3.

The protein resides in the cytoplasm. Its subcellular location is the nucleus. It catalyses the reaction ATP + H2O = ADP + phosphate + H(+). Probable ATP-dependent RNA helicase. May play a role in spermatogenesis. The sequence is that of ATP-dependent RNA helicase DDX3Y (DDX3Y) from Pongo abelii (Sumatran orangutan).